A 123-amino-acid chain; its full sequence is Small ribosomal subunit protein bS16 (123 aa).

The disordered stretch occupies residues 86–123; the sequence is PVRAEQTKQPQPKAKAQQRAKDQAERDAAAAAEAAAGE. The segment covering 93–102 has biased composition (low complexity); the sequence is KQPQPKAKAQ. Residues 104–113 are compositionally biased toward basic and acidic residues; the sequence is RAKDQAERDA. The span at 114 to 123 shows a compositional bias: low complexity; the sequence is AAAAEAAAGE.

It belongs to the bacterial ribosomal protein bS16 family.

This is Small ribosomal subunit protein bS16 from Paramagnetospirillum magneticum (strain ATCC 700264 / AMB-1) (Magnetospirillum magneticum).